Reading from the N-terminus, the 418-residue chain is UDP-N-acetylglucosamine 1-carboxyvinyltransferase (418 aa).

22–23 provides a ligand contact to phosphoenolpyruvate; it reads KN. A UDP-N-acetyl-alpha-D-glucosamine-binding site is contributed by R92. C116 (proton donor) is an active-site residue. Residue C116 is modified to 2-(S-cysteinyl)pyruvic acid O-phosphothioketal. 2 residues coordinate UDP-N-acetyl-alpha-D-glucosamine: D306 and I328.

Belongs to the EPSP synthase family. MurA subfamily.

The protein resides in the cytoplasm. It catalyses the reaction phosphoenolpyruvate + UDP-N-acetyl-alpha-D-glucosamine = UDP-N-acetyl-3-O-(1-carboxyvinyl)-alpha-D-glucosamine + phosphate. The protein operates within cell wall biogenesis; peptidoglycan biosynthesis. In terms of biological role, cell wall formation. Adds enolpyruvyl to UDP-N-acetylglucosamine. In Solibacter usitatus (strain Ellin6076), this protein is UDP-N-acetylglucosamine 1-carboxyvinyltransferase.